The chain runs to 390 residues: ATP-sensitive inward rectifier potassium channel 11 (390 aa).

Over 1-65 (MLSRKGIIPE…LQDVFTTLVD (65 aa)) the chain is Cytoplasmic. ATP is bound by residues asparagine 48 and arginine 50. Residues 66–92 (LKWPHTLLIFTMSFLCSWLLFAMVWWL) traverse the membrane as a helical segment. Over 93–116 (IAFAHGDLAPGEGTTVPCVTSIHS) the chain is Extracellular. A disulfide bridge connects residues cysteine 110 and cysteine 142. An intramembrane region (discontinuously helical; Pore-forming) is located at residues 117 to 133 (FSSAFLFSIEVQVTIGF). Residues threonine 130 and phenylalanine 133 each contribute to the K(+) site. A Selectivity filter motif is present at residues 130 to 135 (TIGFGG). The Extracellular segment spans residues 134-142 (GGRMVTEEC). The helical transmembrane segment at 143-171 (PLAILILIVQNIVGLMINAIMLGCIFMKT) threads the bilayer. Topologically, residues 172–390 (SQAHRRAETL…RFSISPDSLS (219 aa)) are cytoplasmic. Residue arginine 176 coordinates a 1,2-diacyl-sn-glycero-3-phospho-(1D-myo-inositol-4,5-bisphosphate). Tyrosine 330 contributes to the ATP binding site. Threonine 341 is modified (phosphothreonine; by MAPK1). Serine 385 is modified (phosphoserine; by MAPK1).

The protein belongs to the inward rectifier-type potassium channel (TC 1.A.2.1) family. KCNJ11 subfamily. As to quaternary structure, homotetramer; the homotetramer binds four ATP molecules (one ATP per subunit). Forms an heterooctamer with ABCC8/SUR1; one KCNJ11 homotetramer interacts with four ABCC8/SUR1 molecules. Interacts with ABCC9/SUR2. Post-translationally, phosphorylation by MAPK1 results in changes in channel gating that destabilize the closed states and reduce the ATP sensitivity.

Its subcellular location is the membrane. The catalysed reaction is K(+)(in) = K(+)(out). With respect to regulation, KATP channels are regulated by cytoplasmic ATP/ADP ratios; ATP inhibits the channel by closing the pore, while ADP activates the channel. Activated by phosphatidylinositol 4,5-biphosphate (PtdIns(4,5)P2). Inward rectifier potassium channel that forms the pore of ATP-sensitive potassium channels (KATP), regulating potassium permeability as a function of cytoplasmic ATP and ADP concentrations in many different cells. Inward rectifier potassium channels are characterized by a greater tendency to allow potassium to flow into the cell rather than out of it. Their voltage dependence is regulated by the concentration of extracellular potassium; as external potassium is raised, the voltage range of the channel opening shifts to more positive voltages. The inward rectification is mainly due to the blockage of outward current by internal magnesium. Can be blocked by extracellular barium. In pancreatic cells, it forms KATP channels with ABCC8/SUR1. Can form cardiac and smooth muscle-type KATP channels with ABCC9. This Cavia porcellus (Guinea pig) protein is ATP-sensitive inward rectifier potassium channel 11 (KCNJ11).